Consider the following 711-residue polypeptide: Zinc finger protein 175 (711 aa).

Over residues 1 to 11 (MPADVNLSQKP) the composition is skewed to polar residues. A disordered region spans residues 1-21 (MPADVNLSQKPQVLGPEKQDG). A KRAB domain is found at 27–98 (VSFEDVTVDF…EAEVSHQRCQ (72 aa)). The segment at 279–301 (DGCSECGGSFTQKSHLFAQQRIH) adopts a C2H2-type 1; atypical zinc-finger fold. The segment at 307-329 (HECGKCGKAFMPQLKLSVYLTDH) adopts a C2H2-type 2; atypical zinc-finger fold. The C2H2-type 3 zinc-finger motif lies at 335–357 (CICKECGKVFIQRSELLTHQKTH). A Nuclear localization signal motif is present at residues 359 to 362 (RKKP). 12 C2H2-type zinc fingers span residues 363–385 (YKCH…QRTH), 391–413 (YECS…QKIH), 419–441 (YACS…QRIH), 447–469 (YVCI…QRSH), 475–497 (YQCH…HRIH), 503–525 (YECS…QKIH), 531–553 (HVCS…QRIH), 559–581 (YKCS…QRIH), 587–609 (YVCT…QITH), 615–637 (FVCY…QRTH), 643–665 (YECL…QRIH), and 671–693 (YVCS…QTTH).

Belongs to the krueppel C2H2-type zinc-finger protein family. Ubiquitous.

Its subcellular location is the cytoplasm. The protein resides in the nucleus. Its function is as follows. Down-regulates the expression of several chemokine receptors. Interferes with HIV-1 replication by suppressing Tat-induced viral LTR promoter activity. The protein is Zinc finger protein 175 (ZNF175) of Homo sapiens (Human).